Consider the following 779-residue polypeptide: Tricorn protease-interacting factor F3 (779 aa).

Residues Glu-102 and 231–235 contribute to the substrate site; that span reads GAMEN. His-266 contributes to the Zn(2+) binding site. Glu-267 acts as the Proton acceptor in catalysis. The Zn(2+) site is built by His-270 and Glu-289.

It belongs to the peptidase M1 family. As to quaternary structure, part of the tricorn proteolytic complex. Requires Zn(2+) as cofactor.

The protein localises to the cytoplasm. Proteases F1, F2 and F3 degrade oligopeptides produced by Tricorn (themselves probably produced by the proteasome), yielding free amino acids. This Thermoplasma volcanium (strain ATCC 51530 / DSM 4299 / JCM 9571 / NBRC 15438 / GSS1) protein is Tricorn protease-interacting factor F3 (trf3).